The chain runs to 504 residues: MSFSVEVLARIAIELQTGIGHQDRFQRLISTLRHVLDCDASALLRYEGRQFIPLAIDGLAHDVLGRRFTLEGHPRLETIARAGDVVRFPADSDLPDPYDGLIPGQESLKVHACIGLPLFAGQNLIGALTLDGLEPDQFDTFSDEELRLIAALASGALNNALLIEQLESQNIMPGSPVAFEHVAHTEMIGLSPGMMQLKKEIEIVAASDLNVLIGGETGTGKELVAKSIHEASPRAVNPLVYLNCAALPESVAESELFGHVKGAFTGAISNRSGKFEMADNGTLFLDEIGELSLALQAKLLRVLQYGDIQRVGDDRSLRVDVRVLAATNRDLREEVLAGNFRADLFHRLSVFPLSVPPLRERGEDVVLLAGFFCEQCRLKMGLSRVVLSPGARSHLLSYGWPGNVRELEHAIHRAVVLARAARLGDDVVIHARHFALHDEAAPAVAQELPAIANENLREATEAFQRQMITRALDQNGRSWAACARALEMDVANLHRLAKRLGLKG.

The residue at position 57 (Asp57) is a 4-aspartylphosphate. The 230-residue stretch at 187–416 (MIGLSPGMMQ…LEHAIHRAVV (230 aa)) folds into the Sigma-54 factor interaction domain. Residues 215–222 (GETGTGKE) and 278–287 (ADNGTLFLDE) contribute to the ATP site. Positions 479–498 (WAACARALEMDVANLHRLAK) form a DNA-binding region, H-T-H motif.

It functions in the pathway nitrogen metabolism; nitric oxide reduction. Functionally, required for the expression of anaerobic nitric oxide (NO) reductase, acts as a transcriptional activator for at least the norVW operon. Activation also requires sigma-54. This chain is Anaerobic nitric oxide reductase transcription regulator NorR, found in Enterobacter sp. (strain 638).